A 361-amino-acid polypeptide reads, in one-letter code: Biotin synthase (361 aa).

Residues Val47–Arg278 form the Radical SAM core domain. Residues Cys65, Cys69, and Cys72 each coordinate [4Fe-4S] cluster. Residues Ser110, Cys143, and Cys203 each coordinate [2Fe-2S] cluster. Positions Thr323–Arg361 are disordered. Residues Ala339–Pro354 show a composition bias toward basic and acidic residues.

The protein belongs to the radical SAM superfamily. Biotin synthase family. As to quaternary structure, homodimer. [4Fe-4S] cluster serves as cofactor. It depends on [2Fe-2S] cluster as a cofactor.

It carries out the reaction (4R,5S)-dethiobiotin + (sulfur carrier)-SH + 2 reduced [2Fe-2S]-[ferredoxin] + 2 S-adenosyl-L-methionine = (sulfur carrier)-H + biotin + 2 5'-deoxyadenosine + 2 L-methionine + 2 oxidized [2Fe-2S]-[ferredoxin]. The protein operates within cofactor biosynthesis; biotin biosynthesis; biotin from 7,8-diaminononanoate: step 2/2. Catalyzes the conversion of dethiobiotin (DTB) to biotin by the insertion of a sulfur atom into dethiobiotin via a radical-based mechanism. In Anaeromyxobacter sp. (strain K), this protein is Biotin synthase.